The following is a 318-amino-acid chain: Nisin-resistance protein (318 aa).

The helical transmembrane segment at 7–28 threads the bilayer; sequence ILLGLVAVCALFLGIIYLWGYK.

It is found in the cell membrane. The protein is Nisin-resistance protein (nsr) of Lactococcus lactis subsp. lactis (Streptococcus lactis).